Here is a 204-residue protein sequence, read N- to C-terminus: E2 ubiquitin-conjugating enzyme PEX4 (204 aa).

The 195-residue stretch at 2-196 (SAEKRLLQEY…IEYYVGRYSI (195 aa)) folds into the UBC core domain. C133 acts as the Glycyl thioester intermediate in catalysis.

The protein belongs to the ubiquitin-conjugating enzyme family.

It localises to the peroxisome membrane. It carries out the reaction S-ubiquitinyl-[E1 ubiquitin-activating enzyme]-L-cysteine + [E2 ubiquitin-conjugating enzyme]-L-cysteine = [E1 ubiquitin-activating enzyme]-L-cysteine + S-ubiquitinyl-[E2 ubiquitin-conjugating enzyme]-L-cysteine.. Its pathway is protein modification; protein ubiquitination. Its function is as follows. E2 ubiquitin-conjugating enzyme involved in peroxisome biosynthesis. Acts late in peroxisomal matrix protein import, after matrix protein translocation. Required for both monoubiquitination and polyubiquitination of coreceptor PEX20. polyubiquitination of PEX20 at conserved lysine 'Lys-19' near the N-terminus leads to its and proteasomal degradation, whereas a monoubiquitination at the conserved cysteine 'Cys-8' is essential for its recycling. This is E2 ubiquitin-conjugating enzyme PEX4 from Komagataella phaffii (strain GS115 / ATCC 20864) (Yeast).